Reading from the N-terminus, the 458-residue chain is tRNA modification GTPase MnmE (458 aa).

R30, E90, and K129 together coordinate (6S)-5-formyl-5,6,7,8-tetrahydrofolate. The TrmE-type G domain occupies 225–379 (GLSICLIGCP…LHQTIDTIIW (155 aa)). Residue N235 coordinates K(+). GTP-binding positions include 235–240 (NVGKSS), 254–260 (SPIPGTT), and 279–282 (DTAG). S239 provides a ligand contact to Mg(2+). S254, I256, and T259 together coordinate K(+). T260 provides a ligand contact to Mg(2+). Position 458 (K458) interacts with (6S)-5-formyl-5,6,7,8-tetrahydrofolate.

It belongs to the TRAFAC class TrmE-Era-EngA-EngB-Septin-like GTPase superfamily. TrmE GTPase family. In terms of assembly, homodimer. Heterotetramer of two MnmE and two MnmG subunits. The cofactor is K(+).

It localises to the cytoplasm. In terms of biological role, exhibits a very high intrinsic GTPase hydrolysis rate. Involved in the addition of a carboxymethylaminomethyl (cmnm) group at the wobble position (U34) of certain tRNAs, forming tRNA-cmnm(5)s(2)U34. The chain is tRNA modification GTPase MnmE from Protochlamydia amoebophila (strain UWE25).